A 332-amino-acid chain; its full sequence is Hdr-like menaquinol oxidoreductase cytochrome b-like subunit (332 aa).

Helical transmembrane passes span 3 to 23 (GVIFGVIVPYIAVAIFVIGVI), 97 to 117 (DARWLWLFGILFHYSLLLVLI), 143 to 163 (VFIPSVYMSGLAIVAALFLLW), 177 to 197 (LPSDHFALILLLAITISGNVM), and 230 to 250 (IEPIFYVHFALASFLLAYFPF).

Consists of five subunits: an integral membrane subunit, a cytochrome b-like subunit, a cytochrome c subunit and two iron-sulfur subunits.

The protein resides in the cell membrane. Its function is as follows. Has menaquinol-oxidizing activity. HmeC and HmeD subunits may together mediate electron transfer from menaquinol to an unidentified electron acceptor on the cytoplasmic side of the membrane. The protein is Hdr-like menaquinol oxidoreductase cytochrome b-like subunit (hmeC) of Archaeoglobus fulgidus (strain ATCC 49558 / DSM 4304 / JCM 9628 / NBRC 100126 / VC-16).